The following is a 291-amino-acid chain: MSEIRLFVTTTEKQAAAVLDVMSAIFEEDDYAIATMEIDEKRDVWEASVYMMTDEEESVRSRLAQALEVEFSHLPIEREVLPDVDWIAKSLEGLAPVRAGRFVIHGSHDRDKVKPGEIAIEIDAGQAFGTGHHGTTAGCLEMLASVARSRPVRNALDLGTGSGVLAIAAWKLLHVPVLATDIDPIATRVAADNARRNGVVTGLTFATAPGFHSTTFSTNGPFDLIIANILARPLMKMAPQLVANLAPGGSVILSGILAEQRWKVLAAYNGQNLKHARTLWRNGWVTIHLTR.

S-adenosyl-L-methionine is bound by residues Thr-136, Gly-159, Asp-181, and Asn-228.

Belongs to the methyltransferase superfamily. PrmA family.

The protein localises to the cytoplasm. It catalyses the reaction L-lysyl-[protein] + 3 S-adenosyl-L-methionine = N(6),N(6),N(6)-trimethyl-L-lysyl-[protein] + 3 S-adenosyl-L-homocysteine + 3 H(+). Functionally, methylates ribosomal protein L11. This chain is Ribosomal protein L11 methyltransferase, found in Rhizobium meliloti (strain 1021) (Ensifer meliloti).